A 198-amino-acid polypeptide reads, in one-letter code: Nucleoid occlusion factor SlmA (198 aa).

The HTH tetR-type domain maps to 10-70 (NRREEILQSL…SLIEFIEDSL (61 aa)). The segment at residues 33-52 (TTAKLAASVGVSEAALYRHF) is a DNA-binding region (H-T-H motif). The stretch at 117–144 (EQDRLQGRINQLFERIEAQLRQVLREKR) forms a coiled coil.

It belongs to the nucleoid occlusion factor SlmA family. Homodimer. Interacts with FtsZ.

It is found in the cytoplasm. Its subcellular location is the nucleoid. In terms of biological role, required for nucleoid occlusion (NO) phenomenon, which prevents Z-ring formation and cell division over the nucleoid. Acts as a DNA-associated cell division inhibitor that binds simultaneously chromosomal DNA and FtsZ, and disrupts the assembly of FtsZ polymers. SlmA-DNA-binding sequences (SBS) are dispersed on non-Ter regions of the chromosome, preventing FtsZ polymerization at these regions. In Escherichia coli (strain 55989 / EAEC), this protein is Nucleoid occlusion factor SlmA.